Consider the following 429-residue polypeptide: Adenylosuccinate synthetase (429 aa).

Residues 12-18 (GDEGKGK) and 40-42 (GHT) each bind GTP. Aspartate 13 serves as the catalytic Proton acceptor. The Mg(2+) site is built by aspartate 13 and glycine 40. Residues 13-16 (DEGK), 38-41 (NAGH), threonine 130, arginine 144, glutamine 225, threonine 240, and arginine 304 each bind IMP. The active-site Proton donor is the histidine 41. A substrate-binding site is contributed by 300-306 (ATTGRPR). GTP contacts are provided by residues arginine 306, 332 to 334 (KLD), and 414 to 416 (SVG).

The protein belongs to the adenylosuccinate synthetase family. Homodimer. Requires Mg(2+) as cofactor.

Its subcellular location is the cytoplasm. The catalysed reaction is IMP + L-aspartate + GTP = N(6)-(1,2-dicarboxyethyl)-AMP + GDP + phosphate + 2 H(+). It functions in the pathway purine metabolism; AMP biosynthesis via de novo pathway; AMP from IMP: step 1/2. Plays an important role in the de novo pathway of purine nucleotide biosynthesis. Catalyzes the first committed step in the biosynthesis of AMP from IMP. This Syntrophobacter fumaroxidans (strain DSM 10017 / MPOB) protein is Adenylosuccinate synthetase.